A 571-amino-acid chain; its full sequence is Coiled-coil domain-containing protein 22 homolog (571 aa).

Coiled coils occupy residues 406 to 434 (MMDL…SRTA) and 509 to 571 (CAEL…AHLR).

It belongs to the CCDC22 family.

This is Coiled-coil domain-containing protein 22 homolog from Culex quinquefasciatus (Southern house mosquito).